Here is a 913-residue protein sequence, read N- to C-terminus: ER degradation-enhancing alpha-mannosidase-like protein 3 (913 aa).

Positions 1-15 are cleaved as a signal peptide; the sequence is MGCPAVEARRWGDMW. N104 is a glycosylation site (N-linked (GlcNAc...) asparagine). The active-site Proton donor is E132. Residue N181 is glycosylated (N-linked (GlcNAc...) asparagine). The active site involves D279. Catalysis depends on E373, which acts as the Proton donor. E391 is a catalytic residue. Position 477 (T477) interacts with Ca(2+). An N-linked (GlcNAc...) asparagine glycan is attached at N497. Residues 660 to 766 form the PA domain; sequence LSKHLAGAQG…KEGNIILDAI (107 aa). Residue N797 is glycosylated (N-linked (GlcNAc...) asparagine). A disordered region spans residues 823–895; the sequence is EESPVSQPEV…NKVQPMESIL (73 aa). The segment covering 826–839 has biased composition (low complexity); that stretch reads PVSQPEVPSSDSPS. The segment covering 843-866 has biased composition (basic and acidic residues); it reads RTSERDITPESQEHKTEETEHSPK. A Prevents secretion from ER motif is present at residues 910 to 913; sequence KDEL.

The protein belongs to the glycosyl hydrolase 47 family. Requires Ca(2+) as cofactor.

It localises to the endoplasmic reticulum lumen. The catalysed reaction is N(4)-(alpha-D-Man-(1-&gt;2)-alpha-D-Man-(1-&gt;2)-alpha-D-Man-(1-&gt;3)-[alpha-D-Man-(1-&gt;2)-alpha-D-Man-(1-&gt;3)-[alpha-D-Man-(1-&gt;2)-alpha-D-Man-(1-&gt;6)]-alpha-D-Man-(1-&gt;6)]-beta-D-Man-(1-&gt;4)-beta-D-GlcNAc-(1-&gt;4)-beta-D-GlcNAc)-L-asparaginyl-[protein] (N-glucan mannose isomer 9A1,2,3B1,2,3) + 4 H2O = N(4)-(alpha-D-Man-(1-&gt;3)-[alpha-D-Man-(1-&gt;3)-[alpha-D-Man-(1-&gt;6)]-alpha-D-Man-(1-&gt;6)]-beta-D-Man-(1-&gt;4)-beta-D-GlcNAc-(1-&gt;4)-beta-D-GlcNAc)-L-asparaginyl-[protein] (N-glucan mannose isomer 5A1,2) + 4 beta-D-mannose. It carries out the reaction N(4)-(alpha-D-Man-(1-&gt;2)-alpha-D-Man-(1-&gt;2)-alpha-D-Man-(1-&gt;3)-[alpha-D-Man-(1-&gt;3)-[alpha-D-Man-(1-&gt;2)-alpha-D-Man-(1-&gt;6)]-alpha-D-Man-(1-&gt;6)]-beta-D-Man-(1-&gt;4)-beta-D-GlcNAc-(1-&gt;4)-beta-D-GlcNAc)-L-asparaginyl-[protein] (N-glucan mannose isomer 8A1,2,3B1,3) + 3 H2O = N(4)-(alpha-D-Man-(1-&gt;3)-[alpha-D-Man-(1-&gt;3)-[alpha-D-Man-(1-&gt;6)]-alpha-D-Man-(1-&gt;6)]-beta-D-Man-(1-&gt;4)-beta-D-GlcNAc-(1-&gt;4)-beta-D-GlcNAc)-L-asparaginyl-[protein] (N-glucan mannose isomer 5A1,2) + 3 beta-D-mannose. It functions in the pathway protein modification; protein glycosylation. Its function is as follows. May be involved in endoplasmic reticulum-associated degradation (ERAD). The polypeptide is ER degradation-enhancing alpha-mannosidase-like protein 3 (edem3) (Xenopus laevis (African clawed frog)).